The sequence spans 340 residues: DNA-directed RNA polymerase subunit alpha (340 aa).

Residues 1 to 236 (MLSLSKNWNT…EQLQLFISFE (236 aa)) form an alpha N-terminal domain (alpha-NTD) region. The tract at residues 251–340 (FSPYLLKRVD…LSKRYEDSYN (90 aa)) is alpha C-terminal domain (alpha-CTD).

This sequence belongs to the RNA polymerase alpha chain family. As to quaternary structure, homodimer. The RNAP catalytic core consists of 2 alpha, 1 beta, 1 beta' and 1 omega subunit. When a sigma factor is associated with the core the holoenzyme is formed, which can initiate transcription.

The catalysed reaction is RNA(n) + a ribonucleoside 5'-triphosphate = RNA(n+1) + diphosphate. Functionally, DNA-dependent RNA polymerase catalyzes the transcription of DNA into RNA using the four ribonucleoside triphosphates as substrates. The polypeptide is DNA-directed RNA polymerase subunit alpha (Rickettsia africae (strain ESF-5)).